The sequence spans 383 residues: MEESRESPAEHGYYMPAEWDSHAQTWIGWPERQDNWRHNALPAQRVFADVAKAISKFEPVTVCASPAQWENARKQLPEDIRVVEMSMNDSWFRDSGPTFIVRKRPVKLSSLNRNIAGIDWNFNAWGGANDGCYNDWSHDLLVSRKILALERIPRFQHSMILEGGSIHVDGEGTCLVTEECLLNKNRNPHMSKEQIEEELKKYLGVQSFIWLPRGLYGDEDTNGHIDNMCCFARPGVVLLSWTDDETDPQYERSVEALSVLSNSIDARGRKIQVIKLYIPEPLYMTEEESSGITQDGEAIPRLAGTRLAASYVNFYIANGGIIAPQFGDPIRDKEAIRVLSDTFPHHSVVGIENAREIVLAGGNIHCITQQQPAEPTSVAENGH.

Agmatine-binding residues include aspartate 220 and aspartate 226. Cysteine 366 acts as the Amidino-cysteine intermediate in catalysis.

This sequence belongs to the agmatine deiminase family. Forms homodimers.

The enzyme catalyses agmatine + H2O = N-carbamoylputrescine + NH4(+). The protein operates within amine and polyamine biosynthesis; putrescine biosynthesis via agmatine pathway; N-carbamoylputrescine from agmatine: step 1/1. Inhibited by N-ethylmaleimide and iodoacetamide. Its function is as follows. Mediates the hydrolysis of agmatine into N-carbamoylputrescine in the arginine decarboxylase (ADC) pathway of putrescine biosynthesis, a basic polyamine. This chain is Agmatine deiminase (AIH), found in Arabidopsis thaliana (Mouse-ear cress).